The following is a 511-amino-acid chain: Lysine--tRNA ligase 2 (511 aa).

The segment at Met1–Leu22 is disordered. Residues Glu421 and Glu428 each coordinate Mg(2+).

It belongs to the class-II aminoacyl-tRNA synthetase family. As to quaternary structure, homodimer. Requires Mg(2+) as cofactor.

It localises to the cytoplasm. The enzyme catalyses tRNA(Lys) + L-lysine + ATP = L-lysyl-tRNA(Lys) + AMP + diphosphate. In Methanosarcina mazei (strain ATCC BAA-159 / DSM 3647 / Goe1 / Go1 / JCM 11833 / OCM 88) (Methanosarcina frisia), this protein is Lysine--tRNA ligase 2.